The following is a 200-amino-acid chain: Cysteine dioxygenase type 1 (200 aa).

His86, His88, and His140 together coordinate Fe cation. Residues 93–157 (CFLKLLQGNL…TEPAVSLHLY (65 aa)) constitute a cross-link (3'-(S-cysteinyl)-tyrosine (Cys-Tyr)).

The protein belongs to the cysteine dioxygenase family. Monomer. Fe(2+) is required as a cofactor. Ni(2+) serves as cofactor. It depends on Zn(2+) as a cofactor. Post-translationally, the thioether cross-link between Cys-93 and Tyr-157 plays a structural role through stabilizing the Fe(2+) ion, and prevents the production of highly damaging free hydroxyl radicals by holding the oxygen radical via hydroxyl hydrogen. As to expression, highest expression in liver. Also expressed in kidney, lung, brain and small intestine.

The enzyme catalyses L-cysteine + O2 = 3-sulfino-L-alanine + H(+). The protein operates within organosulfur biosynthesis; taurine biosynthesis; hypotaurine from L-cysteine: step 1/2. Functionally, catalyzes the oxidation of cysteine to cysteine sulfinic acid with addition of molecular dioxygen. The chain is Cysteine dioxygenase type 1 (Cdo1) from Mus musculus (Mouse).